A 383-amino-acid chain; its full sequence is Protein delta homolog 1 (383 aa).

The N-terminal stretch at methionine 1–glycine 23 is a signal peptide. EGF-like domains are found at residues alanine 24–glutamate 55, threonine 59–glutamate 86, aspartate 88–glutamine 125, lysine 127–glutamate 168, valine 170–serine 206, and proline 208–alanine 245. The Extracellular segment spans residues alanine 24 to cysteine 306. Intrachain disulfides connect cysteine 26–cysteine 37, cysteine 30–cysteine 43, cysteine 45–cysteine 54, cysteine 63–cysteine 68, cysteine 76–cysteine 85, cysteine 92–cysteine 103, cysteine 97–cysteine 113, cysteine 115–cysteine 124, cysteine 131–cysteine 144, cysteine 138–cysteine 156, cysteine 158–cysteine 167, cysteine 174–cysteine 185, cysteine 179–cysteine 194, cysteine 196–cysteine 205, cysteine 212–cysteine 223, cysteine 217–cysteine 233, and cysteine 235–cysteine 244. The helical transmembrane segment at phenylalanine 307–leucine 327 threads the bilayer. The Cytoplasmic portion of the chain corresponds to asparagine 328–isoleucine 383.

In terms of assembly, monomer. Interacts with SH3RF2. Glycosylated. As to expression, pancreas and adrenal glands (at protein level).

The protein localises to the membrane. It is found in the cytoplasm. May have a role in neuroendocrine differentiation. Inhibits adipocyte differentiation. The polypeptide is Protein delta homolog 1 (Dlk1) (Rattus norvegicus (Rat)).